We begin with the raw amino-acid sequence, 697 residues long: PHD finger protein At1g33420 (697 aa).

The PHD-type zinc-finger motif lies at 603-653; sequence KVDCKCGTKDDDGERMLACDGCGVWHHTRCIGINNADALPSKFLCFRCIEL.

Its subcellular location is the nucleus. This chain is PHD finger protein At1g33420, found in Arabidopsis thaliana (Mouse-ear cress).